The primary structure comprises 110 residues: UPF0122 protein RBAM_015800 (110 aa).

Belongs to the UPF0122 family.

Functionally, might take part in the signal recognition particle (SRP) pathway. This is inferred from the conservation of its genetic proximity to ftsY/ffh. May be a regulatory protein. The chain is UPF0122 protein RBAM_015800 from Bacillus velezensis (strain DSM 23117 / BGSC 10A6 / LMG 26770 / FZB42) (Bacillus amyloliquefaciens subsp. plantarum).